Consider the following 82-residue polypeptide: Small ribosomal subunit protein bS16 (82 aa).

Belongs to the bacterial ribosomal protein bS16 family.

This is Small ribosomal subunit protein bS16 from Proteus mirabilis (strain HI4320).